The sequence spans 671 residues: Transcription factor xilB (671 aa).

Positions 11 to 46 form a DNA-binding region, zn(2)-C6 fungal-type; that stretch reads CHSCYTRKQKASESDSICDRQYPCNHCTRRRRPEEC. The segment at 48–90 is disordered; that stretch reads YGPPPVKVPSCPPVPADQSETQPRPVESARPTRETPVDDSEAH. The span at 49-62 shows a compositional bias: pro residues; the sequence is GPPPVKVPSCPPVP. Residues 77-90 are compositionally biased toward basic and acidic residues; that stretch reads RPTRETPVDDSEAH. The interval 148–593 is fungal transcription factor domain; sequence PERQIIDFLV…ATLLFARSVQ (446 aa). Residues 629-650 form a disordered region; that stretch reads WPSLEAGDPYSMPDNFPSMAQD.

Its subcellular location is the nucleus. Functionally, transcription factor; part of the gene cluster that mediates the biosynthesis of the 6-methyl-2-pyrone derivative xylariolide D. May play a role in the regulation of the expression of the highly reducing polyketide synthase xilA and the cytochroe P450 monooxygenase xilC. This chain is Transcription factor xilB, found in Penicillium rubens (strain ATCC 28089 / DSM 1075 / NRRL 1951 / Wisconsin 54-1255) (Penicillium chrysogenum).